The sequence spans 300 residues: Glutamyl-Q tRNA(Asp) synthetase (300 aa).

Residues 14–18 and Glu-50 contribute to the L-glutamate site; that span reads RFAPT. A 'HIGH' region motif is present at residues 17–27; the sequence is PTPSGFLHFGS. Positions 106, 108, 120, and 124 each coordinate Zn(2+). 2 residues coordinate L-glutamate: Tyr-177 and Arg-195. Residues 233–237 carry the 'KMSKS' region motif; that stretch reads KLGKS. Residue Lys-236 participates in ATP binding.

Belongs to the class-I aminoacyl-tRNA synthetase family. GluQ subfamily. It depends on Zn(2+) as a cofactor.

Its function is as follows. Catalyzes the tRNA-independent activation of glutamate in presence of ATP and the subsequent transfer of glutamate onto a tRNA(Asp). Glutamate is transferred on the 2-amino-5-(4,5-dihydroxy-2-cyclopenten-1-yl) moiety of the queuosine in the wobble position of the QUC anticodon. The polypeptide is Glutamyl-Q tRNA(Asp) synthetase (Pseudomonas putida (strain ATCC 700007 / DSM 6899 / JCM 31910 / BCRC 17059 / LMG 24140 / F1)).